Consider the following 751-residue polypeptide: Photosystem I P700 chlorophyll a apoprotein A1 (751 aa).

Helical transmembrane passes span 73–96 (VFSA…FHGA), 159–182 (LYTT…FHYH), 198–222 (LNHH…HVSL), 294–312 (TAHH…GHMY), 349–372 (WHAQ…HHMY), 388–414 (LSLF…IFMV), 436–458 (AIIS…LYIH), and 533–551 (FLVH…LILL). 2 residues coordinate [4Fe-4S] cluster: cysteine 575 and cysteine 584. A run of 2 helical transmembrane segments spans residues 591-612 (HVFL…HFSW) and 665-687 (LSAY…MFLF). Histidine 676 lines the chlorophyll a' pocket. The chlorophyll a site is built by methionine 684 and tyrosine 692. Residue tryptophan 693 participates in phylloquinone binding. Residues 725–745 (AVGVAHYLLGGIATTWSFFLA) form a helical membrane-spanning segment.

This sequence belongs to the PsaA/PsaB family. The PsaA/B heterodimer binds the P700 chlorophyll special pair and subsequent electron acceptors. PSI consists of a core antenna complex that captures photons, and an electron transfer chain that converts photonic excitation into a charge separation. The eukaryotic PSI reaction center is composed of at least 11 subunits. The cofactor is P700 is a chlorophyll a/chlorophyll a' dimer, A0 is one or more chlorophyll a, A1 is one or both phylloquinones and FX is a shared 4Fe-4S iron-sulfur center..

It localises to the plastid. Its subcellular location is the chloroplast thylakoid membrane. It catalyses the reaction reduced [plastocyanin] + hnu + oxidized [2Fe-2S]-[ferredoxin] = oxidized [plastocyanin] + reduced [2Fe-2S]-[ferredoxin]. PsaA and PsaB bind P700, the primary electron donor of photosystem I (PSI), as well as the electron acceptors A0, A1 and FX. PSI is a plastocyanin/cytochrome c6-ferredoxin oxidoreductase, converting photonic excitation into a charge separation, which transfers an electron from the donor P700 chlorophyll pair to the spectroscopically characterized acceptors A0, A1, FX, FA and FB in turn. Oxidized P700 is reduced on the lumenal side of the thylakoid membrane by plastocyanin or cytochrome c6. The chain is Photosystem I P700 chlorophyll a apoprotein A1 from Tetradesmus obliquus (Green alga).